Reading from the N-terminus, the 138-residue chain is SPbeta prophage-derived uncharacterized protein YopJ (138 aa).

This Bacillus subtilis (strain 168) protein is SPbeta prophage-derived uncharacterized protein YopJ (yopJ).